Reading from the N-terminus, the 339-residue chain is Sphingomyelinase D (339 aa).

Positions 1 to 21 are cleaved as a signal peptide; it reads MVSLLRLCSFLLAAGSILVQG. H60 is an active-site residue. The Mg(2+) site is built by E80, D82, and D128. The SMD-tail motif lies at 309-316; the sequence is ATVDDNPW. The disordered stretch occupies residues 313–339; the sequence is DNPWSSMSKKGSSKSSWVKGEVPSIAH. Low complexity predominate over residues 317–328; it reads SSMSKKGSSKSS.

Belongs to the sphingomyelinase D/phospholipase D family. Requires Mg(2+) as cofactor.

The protein localises to the secreted. The enzyme catalyses a sphingomyelin + H2O = an N-acylsphing-4-enine 1-phosphate + choline + H(+). Catalyzes the hydrolysis of sphingomyelin. Sphingomyelinases D are produced by some spider in their venoms, but also by arthropods such as ticks, or pathogenic bacteria and fungi. They might play a role in pathogenicity through different mechanisms, such as membrane destabilization and host cell penetration, but also pulmonary inflammation and cutaneous lesions. This chain is Sphingomyelinase D, found in Arthroderma benhamiae (strain ATCC MYA-4681 / CBS 112371) (Trichophyton mentagrophytes).